The sequence spans 299 residues: Recombination-associated protein RdgC (299 aa).

It belongs to the RdgC family.

The protein resides in the cytoplasm. It is found in the nucleoid. Its function is as follows. May be involved in recombination. This Laribacter hongkongensis (strain HLHK9) protein is Recombination-associated protein RdgC.